The primary structure comprises 155 residues: NADPH-dependent 7-cyano-7-deazaguanine reductase (155 aa).

Cysteine 53 (thioimide intermediate) is an active-site residue. The Proton donor role is filled by aspartate 60. Residues 75–77 (VES) and 94–95 (HE) each bind substrate.

This sequence belongs to the GTP cyclohydrolase I family. QueF type 1 subfamily.

Its subcellular location is the cytoplasm. It catalyses the reaction 7-aminomethyl-7-carbaguanine + 2 NADP(+) = 7-cyano-7-deazaguanine + 2 NADPH + 3 H(+). It functions in the pathway tRNA modification; tRNA-queuosine biosynthesis. Functionally, catalyzes the NADPH-dependent reduction of 7-cyano-7-deazaguanine (preQ0) to 7-aminomethyl-7-deazaguanine (preQ1). The sequence is that of NADPH-dependent 7-cyano-7-deazaguanine reductase from Brucella anthropi (strain ATCC 49188 / DSM 6882 / CCUG 24695 / JCM 21032 / LMG 3331 / NBRC 15819 / NCTC 12168 / Alc 37) (Ochrobactrum anthropi).